Reading from the N-terminus, the 476-residue chain is Glycogen synthase (476 aa).

Lys-15 serves as a coordination point for ADP-alpha-D-glucose.

This sequence belongs to the glycosyltransferase 1 family. Bacterial/plant glycogen synthase subfamily.

The catalysed reaction is [(1-&gt;4)-alpha-D-glucosyl](n) + ADP-alpha-D-glucose = [(1-&gt;4)-alpha-D-glucosyl](n+1) + ADP + H(+). Its pathway is glycan biosynthesis; glycogen biosynthesis. In terms of biological role, synthesizes alpha-1,4-glucan chains using ADP-glucose. The protein is Glycogen synthase of Mycoplasma mobile (strain ATCC 43663 / 163K / NCTC 11711) (Mesomycoplasma mobile).